The primary structure comprises 412 residues: Phosphoglycerate kinase (412 aa).

Substrate contacts are provided by residues 24-26 (DLN), Arg-44, 67-70 (HLGR), Arg-126, and Arg-170. ATP is bound by residues Lys-220, Gly-308, Glu-339, and 368 to 371 (GGDS).

The protein belongs to the phosphoglycerate kinase family. Monomer.

Its subcellular location is the cytoplasm. It catalyses the reaction (2R)-3-phosphoglycerate + ATP = (2R)-3-phospho-glyceroyl phosphate + ADP. The protein operates within carbohydrate degradation; glycolysis; pyruvate from D-glyceraldehyde 3-phosphate: step 2/5. This is Phosphoglycerate kinase from Mycobacteroides abscessus (strain ATCC 19977 / DSM 44196 / CCUG 20993 / CIP 104536 / JCM 13569 / NCTC 13031 / TMC 1543 / L948) (Mycobacterium abscessus).